The following is a 576-amino-acid chain: Colicin-E7 (576 aa).

3 disordered regions span residues 1-75 (MSGG…GGGS), 421-478 (SSAL…PVPD), and 506-557 (DPEL…GVYD). The span at 19–35 (NINGGPTGLGGNGGASD) shows a compositional bias: gly residues. A compositionally biased stretch (low complexity) spans 36–45 (GSGWSSENNP). Gly residues predominate over residues 46–75 (WGGGSGSGVHWGGGSGHGNGGGNSNSGGGS). 2 stretches are compositionally biased toward basic and acidic residues: residues 424–447 (LERRKQKENKEKDAKAKLDKESKR) and 535–548 (SGKRTSFELHHEKP). Positions 544, 569, and 573 each coordinate Zn(2+).

It belongs to the colicin/pyosin nuclease family.

Functionally, this plasmid-coded bactericidal protein is an endonuclease active on both single- and double-stranded DNA but with undefined specificity. Its function is as follows. Colicins are polypeptide toxins produced by and active against E.coli and closely related bacteria. This chain is Colicin-E7 (colE7), found in Escherichia coli.